Consider the following 447-residue polypeptide: 3-phosphoshikimate 1-carboxyvinyltransferase (447 aa).

The tract at residues 1–22 is disordered; it reads MTPSLKRLSGAMRARPAPALSG. 3-phosphoshikimate-binding residues include lysine 30, serine 31, and arginine 35. Lysine 30 provides a ligand contact to phosphoenolpyruvate. 2 residues coordinate phosphoenolpyruvate: glycine 102 and arginine 130. Residues serine 173, glutamine 175, aspartate 325, and lysine 352 each contribute to the 3-phosphoshikimate site. Glutamine 175 is a binding site for phosphoenolpyruvate. The active-site Proton acceptor is aspartate 325. The phosphoenolpyruvate site is built by arginine 356 and arginine 401.

This sequence belongs to the EPSP synthase family. In terms of assembly, monomer.

It localises to the cytoplasm. The catalysed reaction is 3-phosphoshikimate + phosphoenolpyruvate = 5-O-(1-carboxyvinyl)-3-phosphoshikimate + phosphate. It participates in metabolic intermediate biosynthesis; chorismate biosynthesis; chorismate from D-erythrose 4-phosphate and phosphoenolpyruvate: step 6/7. Functionally, catalyzes the transfer of the enolpyruvyl moiety of phosphoenolpyruvate (PEP) to the 5-hydroxyl of shikimate-3-phosphate (S3P) to produce enolpyruvyl shikimate-3-phosphate and inorganic phosphate. This chain is 3-phosphoshikimate 1-carboxyvinyltransferase, found in Maricaulis maris (strain MCS10) (Caulobacter maris).